A 294-amino-acid polypeptide reads, in one-letter code: Bifunctional protein FolD (294 aa).

NADP(+)-binding positions include 166–168 (GRS), Ser-191, and Ile-232.

The protein belongs to the tetrahydrofolate dehydrogenase/cyclohydrolase family. As to quaternary structure, homodimer.

The enzyme catalyses (6R)-5,10-methylene-5,6,7,8-tetrahydrofolate + NADP(+) = (6R)-5,10-methenyltetrahydrofolate + NADPH. It catalyses the reaction (6R)-5,10-methenyltetrahydrofolate + H2O = (6R)-10-formyltetrahydrofolate + H(+). It participates in one-carbon metabolism; tetrahydrofolate interconversion. Its function is as follows. Catalyzes the oxidation of 5,10-methylenetetrahydrofolate to 5,10-methenyltetrahydrofolate and then the hydrolysis of 5,10-methenyltetrahydrofolate to 10-formyltetrahydrofolate. This is Bifunctional protein FolD from Nitrobacter winogradskyi (strain ATCC 25391 / DSM 10237 / CIP 104748 / NCIMB 11846 / Nb-255).